Here is a 700-residue protein sequence, read N- to C-terminus: Chaperonin CPN60, mitochondrial (700 aa).

The transit peptide at 1-9 (MRMKRIHIL) directs the protein to the mitochondrion. Residues 636 to 700 (TYKHKLHDDE…SMNDEYNYDE (65 aa)) are disordered. A compositionally biased stretch (acidic residues) spans 644 to 700 (DEDTDEDDEEDEDDEDDEDDLDDDDYDDEDEEDEEDEEDEDDEDDEDSMNDEYNYDE).

Belongs to the chaperonin (HSP60) family.

It is found in the mitochondrion matrix. Its function is as follows. Implicated in mitochondrial protein import and macromolecular assembly. May facilitate the correct folding of imported proteins. May also prevent misfolding and promote the refolding and proper assembly of unfolded polypeptides generated under stress conditions in the mitochondrial matrix. This chain is Chaperonin CPN60, mitochondrial, found in Plasmodium falciparum (isolate FCR-3 / Gambia).